Consider the following 593-residue polypeptide: Probable metalloprotease ARX1 (593 aa).

It belongs to the peptidase M24 family. Component of the nucleoplasmic and cytoplasmic pre-60S ribosomal particles. Interacts directly with REI1.

The protein resides in the cytoplasm. The protein localises to the nucleus. Its function is as follows. Probable metalloprotease involved in proper assembly of pre-ribosomal particles during the biogenesis of the 60S ribosomal subunit. Accompanies the pre-60S particles to the cytoplasm. The sequence is that of Probable metalloprotease ARX1 (ARX1) from Saccharomyces cerevisiae (strain ATCC 204508 / S288c) (Baker's yeast).